A 162-amino-acid polypeptide reads, in one-letter code: FCS-Like Zinc finger 6 (162 aa).

Disordered regions lie at residues Asn25 to Asn47 and Arg121 to Val162. The span at Pro27–Asn47 shows a compositional bias: polar residues. The FLZ-type zinc-finger motif lies at His88–Glu132. Residues Ala147 to Val162 show a composition bias toward low complexity.

The protein belongs to the FLZ family. As to quaternary structure, interacts with KIN10 and KIN11 via its FLZ-type zinc finger domain. In terms of tissue distribution, early expressed in hypocotyl and cotyledon. Later expressed in old or senescing leaves and in pistil, pollen and filament of open flowers.

Its subcellular location is the nucleus. The protein resides in the cytoplasm. It is found in the endoplasmic reticulum. Its function is as follows. May act as an adapter to facilitate the interaction of SnRK1 complex with effector proteins, conferring tissue- and stimulus-type specific differences in the SnRK1 regulation pathway. Negatively regulates KIN10 leading to a repression of the SnRK1 signaling pathway. The protein is FCS-Like Zinc finger 6 of Arabidopsis thaliana (Mouse-ear cress).